The following is a 310-amino-acid chain: GMP synthase [glutamine-hydrolyzing] subunit B (310 aa).

Positions 2-185 (FKTEPFIEES…LGLPDQIAHR (184 aa)) constitute a GMPS ATP-PPase domain. An ATP-binding site is contributed by 29-35 (SGGVDSS).

As to quaternary structure, heterodimer composed of a glutamine amidotransferase subunit (A) and a GMP-binding subunit (B).

It catalyses the reaction XMP + L-glutamine + ATP + H2O = GMP + L-glutamate + AMP + diphosphate + 2 H(+). The protein operates within purine metabolism; GMP biosynthesis; GMP from XMP (L-Gln route): step 1/1. Functionally, catalyzes the synthesis of GMP from XMP. The polypeptide is GMP synthase [glutamine-hydrolyzing] subunit B (Methanococcus maripaludis (strain C7 / ATCC BAA-1331)).